The primary structure comprises 337 residues: Perakine reductase (337 aa).

Y57 acts as the Proton donor in catalysis. H126 lines the substrate pocket. 205-214 (SPIGRGLFAG) provides a ligand contact to NADP(+).

The protein belongs to the aldo/keto reductase family.

It catalyses the reaction raucaffrinoline + NADP(+) = perakine + NADPH + H(+). In terms of biological role, aldo-keto reductase involved in the biosynthesis of monoterpenoid indole alkaloids. Broad substrate specificity enzyme with a high selectivity in the group of alkaloids. Can use perakine, 19(S),20(R)-dihydro-peraksine-17,21-al, cinnamic aldehyde, p-coumaric aldehyde and 3-(3,4,5-trimethoxyphenyl)propanal as substrates, but not ketosteroids such as progesterone. NADPH could not be replaced by NADH. This is Perakine reductase (PR) from Rauvolfia serpentina (Serpentine wood).